Reading from the N-terminus, the 614-residue chain is MDNKKIVLLIIFSTSLLFLWDAWIKEQEKFNNPPAITQADSSAGSTQSRNDDSLPVPGSELTSSQASPDTNGIPASGGNGDSVTPRLLPSGEQIRVVTDKVIAEIDTIGGDLRRLELLQQPSSEDKDTPYALLYSEAARTYIAQSGLVGEGLPNHKTTFRAESDIRNYELSSGEDKIVIRLLAPEAQGVQVIKTYTFHRDSYVIDVGFEVENKGDATVRPFAYFQMLRDGNPPPAKTMMIPTFLGAAVYTEEGKYQKIPFSDLDKNKADYPANANNGWIAMLEHYFLTAWLPQQQTPREFFAKRQSDNLYSAGVIVPAGVIAPGEIAATTMPFYAGPEEQDNLEGLAPGLDLTVDYGWLTVIAKPLFRLLSFYHSWTDNWGVAIILLTMTVKLLFFPLSAAGYRSMAKLRLVTPKLKRIQDQYKGDRQRMHQAMMEFYKEEKINPMGGCFPILVQIPVFIALYWTILAAVELRYAPLALWIDDLSSPDPFYMLPLLMGISMFVQTKLNPTPTDPLQAKIMQIMPVAFSAIFFFFPAGLVLYSLVNNILSIAQQWKITKMYGTAPSKDTPEPPVSKQVNSSENPETTANSPADSPKQPQTPANNPRKMYKRTRKK.

The helical transmembrane segment at 6–26 (IVLLIIFSTSLLFLWDAWIKE) threads the bilayer. Composition is skewed to polar residues over residues 34-48 (PAIT…STQS) and 60-70 (ELTSSQASPDT). The disordered stretch occupies residues 34-87 (PAITQADSSAGSTQSRNDDSLPVPGSELTSSQASPDTNGIPASGGNGDSVTPRL). The next 4 membrane-spanning stretches (helical) occupy residues 380 to 400 (WGVA…PLSA), 450 to 470 (FPIL…LAAV), 484 to 504 (LSSP…MFVQ), and 524 to 544 (PVAF…YSLV). Positions 562–614 (TAPSKDTPEPPVSKQVNSSENPETTANSPADSPKQPQTPANNPRKMYKRTRKK) are disordered. Residues 575–602 (KQVNSSENPETTANSPADSPKQPQTPAN) are compositionally biased toward polar residues.

This sequence belongs to the OXA1/ALB3/YidC family. Type 1 subfamily. Interacts with the Sec translocase complex via SecD. Specifically interacts with transmembrane segments of nascent integral membrane proteins during membrane integration.

Its subcellular location is the cell inner membrane. Functionally, required for the insertion and/or proper folding and/or complex formation of integral membrane proteins into the membrane. Involved in integration of membrane proteins that insert both dependently and independently of the Sec translocase complex, as well as at least some lipoproteins. Aids folding of multispanning membrane proteins. This is Membrane protein insertase YidC from Nitrosomonas europaea (strain ATCC 19718 / CIP 103999 / KCTC 2705 / NBRC 14298).